Reading from the N-terminus, the 333-residue chain is Flotillin-like protein FloA (333 aa).

Helical transmembrane passes span 8–28 and 30–50; these read LMPI…FTFI and VGLW…TLVG.

Belongs to the flotillin-like FloA family. In terms of assembly, homooligomerizes.

Its subcellular location is the cell membrane. It is found in the membrane raft. Its function is as follows. Found in functional membrane microdomains (FMM) that may be equivalent to eukaryotic membrane rafts. FMMs are highly dynamic and increase in number as cells age. Flotillins are thought to be important factors in membrane fluidity. The chain is Flotillin-like protein FloA from Desulfitobacterium hafniense (strain DSM 10664 / DCB-2).